The following is a 120-amino-acid chain: Ribosome-binding factor A (120 aa).

The protein belongs to the RbfA family. In terms of assembly, monomer. Binds 30S ribosomal subunits, but not 50S ribosomal subunits or 70S ribosomes.

It is found in the cytoplasm. In terms of biological role, one of several proteins that assist in the late maturation steps of the functional core of the 30S ribosomal subunit. Associates with free 30S ribosomal subunits (but not with 30S subunits that are part of 70S ribosomes or polysomes). Required for efficient processing of 16S rRNA. May interact with the 5'-terminal helix region of 16S rRNA. This Rickettsia africae (strain ESF-5) protein is Ribosome-binding factor A.